The following is a 266-amino-acid chain: Protein crossbronx-like (266 aa).

The UBC core domain occupies 15-178 (KQGYHILAEY…VQEQAIASRN (164 aa)).

This sequence belongs to the ubiquitin-conjugating enzyme family. FTS subfamily.

The polypeptide is Protein crossbronx-like (Drosophila erecta (Fruit fly)).